We begin with the raw amino-acid sequence, 602 residues long: Fumarate reductase flavoprotein subunit (602 aa).

FAD is bound by residues 12–16 (GAGGA), 36–38 (ISK), 44–52 (SHTVAAEGG), 156–158 (HFV), 192–193 (AT), and Asp-212. The residue at position 45 (His-45) is a Tele-8alpha-FAD histidine. Catalysis depends on residues His-233 and Arg-249. Residues 356 to 357 (HY), Glu-380, and 391 to 397 (RLGSNSL) contribute to the FAD site. The segment at 581-602 (YGGEADAADKAEAANKKEKANG) is disordered. Over residues 587-602 (AADKAEAANKKEKANG) the composition is skewed to basic and acidic residues.

It belongs to the FAD-dependent oxidoreductase 2 family. FRD/SDH subfamily. In terms of assembly, part of an enzyme complex containing four subunits: a flavoprotein (FrdA), an iron-sulfur protein (FrdB), and two hydrophobic anchor proteins (FrdC and FrdD). Can be cross-linked to SdhE. Purified from membrane fractions associated with protoporphyrinogen IX dehydrogenase (hemG). Requires FAD as cofactor.

Its subcellular location is the cell inner membrane. The enzyme catalyses a quinone + succinate = fumarate + a quinol. It carries out the reaction a menaquinone + succinate = a menaquinol + fumarate. With respect to regulation, inhibited by oxaloacetate, a substrate analog. Functionally, two distinct, membrane-bound, FAD-containing enzymes are responsible for the catalysis of fumarate and succinate interconversion; fumarate reductase is used during anaerobic growth, and succinate dehydrogenase is used during aerobic growth. The QFR enzyme complex binds 2 quinones in or near the membrane; 1 near the [3Fe-4S] cluster (QP is proximal to the [3Fe-4S] cluster, on the cytoplasmic side of the membrane) while QD (the distal cluster) is on the other side of the membrane. It is not clear if both of the quinol-binding sites are functionally relevant. The polypeptide is Fumarate reductase flavoprotein subunit (frdA) (Escherichia coli (strain K12)).